Here is a 334-residue protein sequence, read N- to C-terminus: Protein-methionine-sulfoxide reductase catalytic subunit MsrP (334 aa).

The segment at residues Met1–Ala44 is a signal peptide (tat-type signal). Residues Asn88, Tyr91–Glu92, Cys146, Thr181, Asn233, Arg238, and Gly249–Lys251 each bind Mo-molybdopterin.

It belongs to the MsrP family. As to quaternary structure, heterodimer of a catalytic subunit (MsrP) and a heme-binding subunit (MsrQ). Mo-molybdopterin serves as cofactor. Predicted to be exported by the Tat system. The position of the signal peptide cleavage has not been experimentally proven.

Its subcellular location is the periplasm. The catalysed reaction is L-methionyl-[protein] + a quinone + H2O = L-methionyl-(S)-S-oxide-[protein] + a quinol. It carries out the reaction L-methionyl-[protein] + a quinone + H2O = L-methionyl-(R)-S-oxide-[protein] + a quinol. Functionally, part of the MsrPQ system that repairs oxidized periplasmic proteins containing methionine sulfoxide residues (Met-O), using respiratory chain electrons. Thus protects these proteins from oxidative-stress damage caused by reactive species of oxygen and chlorine generated by the host defense mechanisms. MsrPQ is essential for the maintenance of envelope integrity under bleach stress, rescuing a wide series of structurally unrelated periplasmic proteins from methionine oxidation, including the primary periplasmic chaperone SurA and the lipoprotein Pal. The catalytic subunit MsrP is non-stereospecific, being able to reduce both (R-) and (S-) diastereoisomers of methionine sulfoxide. The sequence is that of Protein-methionine-sulfoxide reductase catalytic subunit MsrP from Escherichia coli O81 (strain ED1a).